The primary structure comprises 97 residues: RNA-binding protein Hfq (97 aa).

The region spanning 10–70 is the Sm domain; the sequence is DPFLNALRKE…ISTIVPARSV (61 aa).

Belongs to the Hfq family. In terms of assembly, homohexamer.

RNA chaperone that binds small regulatory RNA (sRNAs) and mRNAs to facilitate mRNA translational regulation in response to envelope stress, environmental stress and changes in metabolite concentrations. Also binds with high specificity to tRNAs. In Neisseria gonorrhoeae (strain ATCC 700825 / FA 1090), this protein is RNA-binding protein Hfq.